Here is a 718-residue protein sequence, read N- to C-terminus: Kinesin-like protein KIF2C (718 aa).

The globular stretch occupies residues 1–248 (MESLPARLFP…CHPLTLTDPT (248 aa)). Phosphoserine occurs at positions 3 and 19. A disordered region spans residues 86-111 (PKQKRRSVNSKIPAPKEGLRSRSTRM). Serine 92 bears the Phosphoserine; by AURKB mark. Positions 95–98 (SKIP) match the Microtubule tip localization signal motif. A phosphoserine mark is found at serine 106, serine 108, serine 112, serine 163, and serine 186. A negative regulator of microtubule-binding region spans residues 201-232 (EKRAQNSEIRIKRAQEYDSSFPNWEFARMIKE). Residues 252–582 (RICVCVRKRP…LRYADRVKEL (331 aa)) form the Kinesin motor domain. Residues arginine 258 and 342–349 (GQTGSGKT) contribute to the ATP site. Positions 409–412 (KKAK) match the Nuclear localization signal motif. Residues serine 513 and serine 626 each carry the phosphoserine modification. Coiled-coil stretches lie at residues 613–651 (NFKE…IIQQ) and 689–716 (ALRE…SKKR).

This sequence belongs to the TRAFAC class myosin-kinesin ATPase superfamily. Kinesin family. MCAK/KIF2 subfamily. In terms of assembly, interacts with CENPH. Interacts with MTUS2/TIP150; the interaction is direct. Interacts with MAPRE1; the interaction is direct, regulated by phosphorylation and is probably required for targeting to growing microtubule plus ends. Interacts with KIF18B at microtubule tips; this interaction increases the affinity of both partners for microtubule plus ends and is required for robust microtubule depolymerization. Phosphorylation by AURKA or AURKB strongly reduces KIF18B-binding. Post-translationally, phosphorylation by AURKB, regulates association with centromeres and kinetochores and the microtubule depolymerization activity. In terms of processing, ubiquitinated.

Its subcellular location is the cytoplasm. The protein resides in the cytoskeleton. It is found in the nucleus. It localises to the chromosome. The protein localises to the centromere. Its subcellular location is the kinetochore. Its function is as follows. In complex with KIF18B, constitutes the major microtubule plus-end depolymerizing activity in mitotic cells. Regulates the turnover of microtubules at the kinetochore and functions in chromosome segregation during mitosis. Plays a role in chromosome congression and is required for the lateral to end-on conversion of the chromosome-microtubule attachment. The polypeptide is Kinesin-like protein KIF2C (KIF2C) (Cricetulus griseus (Chinese hamster)).